Here is a 369-residue protein sequence, read N- to C-terminus: Nudix hydrolase 8 (369 aa).

Residues 188–318 (SHQVGVGGFV…GDKMFKRVIE (131 aa)) form the Nudix hydrolase domain. A Nudix box motif is present at residues 225 to 246 (GFINESEEIFSGAVREVKEETG). Glutamate 240 and glutamate 244 together coordinate Mg(2+).

The protein belongs to the Nudix hydrolase family. The cofactor is Mg(2+). It depends on Mn(2+) as a cofactor. Expressed in roots, stems and, at lower level, leaves.

Functionally, probably mediates the hydrolysis of some nucleoside diphosphate derivatives. May be involved in plant immunity and act as a positive regulator of defense response through salicylic acid (SA) signaling. The protein is Nudix hydrolase 8 (NUDT8) of Arabidopsis thaliana (Mouse-ear cress).